The primary structure comprises 331 residues: Myc-associated zinc finger protein (331 aa).

Disordered stretches follow at residues 46-65 (AQSP…APAA) and 108-131 (TVDT…SAPA). Residues 117–127 (PPAPPPPPPAV) are compositionally biased toward pro residues. C2H2-type zinc fingers lie at residues 177–199 (YICA…EAIH), 266–288 (HACE…KLSH), 294–316 (YQCP…VRSH), and 324–331 (YNCSHCGK).

As to quaternary structure, interacts with BPTF. As to expression, ubiquitously expressed.

Its subcellular location is the nucleus. Its function is as follows. Transcriptional regulator. Acts as a transcriptional activator that binds to purine-rich GAGA sites found in the promoter of many genes including insulin I and II and islet amyloid polypeptide. This is Myc-associated zinc finger protein (MAZ) from Mesocricetus auratus (Golden hamster).